Consider the following 317-residue polypeptide: Ribosomal protein L11 methyltransferase (317 aa).

S-adenosyl-L-methionine-binding residues include Thr158, Gly179, Asp201, and Asn244.

The protein belongs to the methyltransferase superfamily. PrmA family.

The protein localises to the cytoplasm. It catalyses the reaction L-lysyl-[protein] + 3 S-adenosyl-L-methionine = N(6),N(6),N(6)-trimethyl-L-lysyl-[protein] + 3 S-adenosyl-L-homocysteine + 3 H(+). Methylates ribosomal protein L11. The sequence is that of Ribosomal protein L11 methyltransferase from Streptococcus agalactiae serotype Ia (strain ATCC 27591 / A909 / CDC SS700).